The chain runs to 294 residues: Phosphate import ATP-binding protein PstB (294 aa).

Residues 1 to 18 (MSETMTNQNVVNEEQPFN) show a composition bias toward polar residues. The disordered stretch occupies residues 1 to 24 (MSETMTNQNVVNEEQPFNESKHRS). Residues 48 to 289 (LEVNKLKLFY…PSCKQTEDYI (242 aa)) enclose the ABC transporter domain. 80–87 (GPSGCGKS) is a binding site for ATP.

This sequence belongs to the ABC transporter superfamily. Phosphate importer (TC 3.A.1.7) family. The complex is composed of two ATP-binding proteins (PstB), two transmembrane proteins (PstC and PstA) and a solute-binding protein (PstS).

It is found in the cell inner membrane. It carries out the reaction phosphate(out) + ATP + H2O = ADP + 2 phosphate(in) + H(+). In terms of biological role, part of the ABC transporter complex PstSACB involved in phosphate import. Responsible for energy coupling to the transport system. This chain is Phosphate import ATP-binding protein PstB, found in Hahella chejuensis (strain KCTC 2396).